The chain runs to 423 residues: Voltage-dependent calcium channel gamma-8 subunit (423 aa).

Helical transmembrane passes span 19–39 (VQVL…TIAI), 127–147 (SSIF…CVAA), 157–177 (IILG…IGVI), and 207–227 (FGGL…NIYI). Residues Ser251 and Ser254 each carry the phosphoserine modification. The interval 271–304 (RRSRSSSRGSSEASPSRDASPGGPGGPGFASTDI) is disordered. Residues 276–287 (SSRGSSEASPSR) are compositionally biased toward low complexity. Residues 318–338 (VAAGLASAGGGGSGAGVGAYG) form a helical membrane-spanning segment. Disordered regions lie at residues 342–363 (GAAG…GFLT) and 378–423 (VTVT…TTPV). Residues 384 to 399 (PAAPAPAPAPPAPAAP) show a composition bias toward pro residues. Residues 410 to 423 (ASNTNTLNRKTTPV) are compositionally biased toward polar residues.

It belongs to the PMP-22/EMP/MP20 family. CACNG subfamily. In terms of assembly, interacts with CACNA1C. Identified in a complex with the L-type calcium channel subunits CACNA1C, CACNA2D1 and either CACNB1 or CACNB2. Acts as an auxiliary subunit for AMPA-selective glutamate receptors (AMPARs). Found in a complex with GRIA1, GRIA2, GRIA3, GRIA4, CNIH2, CNIH3, CACNG2, CACNG3, CACNG4, CACNG5 and CACNG7. Interacts with CNIH2. Found in a complex with GRIA1, GRIA2, GRIA3, GRIA4, DLG4 and CNIH2. In terms of processing, palmitoylated. Probably palmitoylated by ZDHHC3 and ZDHHC7.

The protein localises to the cell membrane. It is found in the postsynaptic density membrane. Regulates the activity of L-type calcium channels that contain CACNA1C as pore-forming subunit. Regulates the trafficking and gating properties of AMPA-selective glutamate receptors (AMPARs). Promotes their targeting to the cell membrane and synapses and modulates their gating properties by slowing their rates of activation, deactivation and desensitization and by mediating their resensitization. Does not show subunit-specific AMPA receptor regulation and regulates all AMPAR subunits. Thought to stabilize the calcium channel in an inactivated (closed) state. This chain is Voltage-dependent calcium channel gamma-8 subunit, found in Mus musculus (Mouse).